The chain runs to 177 residues: Disulfide bond formation protein B (177 aa).

At 1 to 14 the chain is on the cytoplasmic side; that stretch reads MMVWNWIDRTPRRV. Residues 15–31 form a helical membrane-spanning segment; that stretch reads LALISLACVALLACGLY. Topologically, residues 32-49 are periplasmic; that stretch reads LQHVVGLVPCPMCIVQRY. Residues C41 and C44 are joined by a disulfide bond. Residues 50-64 traverse the membrane as a helical segment; sequence ALIGLALLTGLASAR. Residues 65-70 lie on the Cytoplasmic side of the membrane; that stretch reads SAKGWW. Residues 71–89 form a helical membrane-spanning segment; sequence LTLSALAALTAGFGATVAA. Topologically, residues 90–145 are periplasmic; the sequence is RQSWLQWYPPQSVSCGRDFYGMIESFPLSRAIPMILRGSGDCAAVDWSLLGGSIAN. A disulfide bond links C104 and C131. A helical membrane pass occupies residues 146 to 164; it reads WSFLCFALLGLLLLALLAR. The Cytoplasmic portion of the chain corresponds to 165-177; that stretch reads GVRGARQRAPAPV.

This sequence belongs to the DsbB family.

It is found in the cell inner membrane. In terms of biological role, required for disulfide bond formation in some periplasmic proteins. Acts by oxidizing the DsbA protein. The sequence is that of Disulfide bond formation protein B from Verminephrobacter eiseniae (strain EF01-2).